A 289-amino-acid chain; its full sequence is Energy-coupling factor transporter ATP-binding protein EcfA2 (289 aa).

Residues 3–246 (IEIKDVEHRY…KDDIAALGLD (244 aa)) enclose the ABC transporter domain. Residue 40–47 (GHTGSGKS) coordinates ATP.

The protein belongs to the ABC transporter superfamily. Energy-coupling factor EcfA family. Forms a stable energy-coupling factor (ECF) transporter complex composed of 2 membrane-embedded substrate-binding proteins (S component), 2 ATP-binding proteins (A component) and 2 transmembrane proteins (T component).

The protein resides in the cell membrane. Functionally, ATP-binding (A) component of a common energy-coupling factor (ECF) ABC-transporter complex. Unlike classic ABC transporters this ECF transporter provides the energy necessary to transport a number of different substrates. The polypeptide is Energy-coupling factor transporter ATP-binding protein EcfA2 (Bacillus licheniformis (strain ATCC 14580 / DSM 13 / JCM 2505 / CCUG 7422 / NBRC 12200 / NCIMB 9375 / NCTC 10341 / NRRL NRS-1264 / Gibson 46)).